A 383-amino-acid chain; its full sequence is Probable tRNA sulfurtransferase (383 aa).

Residues 58-158 (NEIIHILKMI…ENKSYVWFDK (101 aa)) enclose the THUMP domain. ATP contacts are provided by residues 176–177 (LL), 201–202 (TF), Arg259, Gly281, and Gln290.

Belongs to the ThiI family.

It is found in the cytoplasm. It carries out the reaction [ThiI sulfur-carrier protein]-S-sulfanyl-L-cysteine + a uridine in tRNA + 2 reduced [2Fe-2S]-[ferredoxin] + ATP + H(+) = [ThiI sulfur-carrier protein]-L-cysteine + a 4-thiouridine in tRNA + 2 oxidized [2Fe-2S]-[ferredoxin] + AMP + diphosphate. The catalysed reaction is [ThiS sulfur-carrier protein]-C-terminal Gly-Gly-AMP + S-sulfanyl-L-cysteinyl-[cysteine desulfurase] + AH2 = [ThiS sulfur-carrier protein]-C-terminal-Gly-aminoethanethioate + L-cysteinyl-[cysteine desulfurase] + A + AMP + 2 H(+). It functions in the pathway cofactor biosynthesis; thiamine diphosphate biosynthesis. Functionally, catalyzes the ATP-dependent transfer of a sulfur to tRNA to produce 4-thiouridine in position 8 of tRNAs, which functions as a near-UV photosensor. Also catalyzes the transfer of sulfur to the sulfur carrier protein ThiS, forming ThiS-thiocarboxylate. This is a step in the synthesis of thiazole, in the thiamine biosynthesis pathway. The sulfur is donated as persulfide by IscS. In Malacoplasma penetrans (strain HF-2) (Mycoplasma penetrans), this protein is Probable tRNA sulfurtransferase.